The sequence spans 600 residues: Sulfite reductase [NADPH] flavoprotein alpha-component (600 aa).

One can recognise a Flavodoxin-like domain in the interval 63–201; the sequence is ITLISASQTG…AAQAWRQRVV (139 aa). Residues 69 to 74, 116 to 119, and 152 to 161 contribute to the FMN site; these read SQTGNA, STQG, and LGDTSYEHFC. The FAD-binding FR-type domain occupies 235 to 449; sequence ESPLTATLSV…IEHNDNFRLP (215 aa). FAD contacts are provided by residues threonine 323, alanine 357, 387–390, 405–407, and 420–423; these read RLYS, TVG, and GGAS. NADP(+)-binding positions include 520–521, 526–530, and aspartate 562; these read SR and KIYVQ. FAD is bound at residue tyrosine 600.

It belongs to the NADPH-dependent sulphite reductase flavoprotein subunit CysJ family. This sequence in the N-terminal section; belongs to the flavodoxin family. In the C-terminal section; belongs to the flavoprotein pyridine nucleotide cytochrome reductase family. Alpha(8)-beta(8). The alpha component is a flavoprotein, the beta component is a hemoprotein. FAD is required as a cofactor. FMN serves as cofactor.

The catalysed reaction is hydrogen sulfide + 3 NADP(+) + 3 H2O = sulfite + 3 NADPH + 4 H(+). Its pathway is sulfur metabolism; hydrogen sulfide biosynthesis; hydrogen sulfide from sulfite (NADPH route): step 1/1. Its function is as follows. Component of the sulfite reductase complex that catalyzes the 6-electron reduction of sulfite to sulfide. This is one of several activities required for the biosynthesis of L-cysteine from sulfate. The flavoprotein component catalyzes the electron flow from NADPH -&gt; FAD -&gt; FMN to the hemoprotein component. This chain is Sulfite reductase [NADPH] flavoprotein alpha-component, found in Cronobacter sakazakii (strain ATCC BAA-894) (Enterobacter sakazakii).